Consider the following 298-residue polypeptide: ADP/ATP translocase 2 (298 aa).

Residue Met1 is modified to N-acetylmethionine. The Mitochondrial intermembrane segment spans residues 1–7 (MTDAAVS). Thr2 carries the post-translational modification N-acetylthreonine; in ADP/ATP translocase 2, N-terminally processed. The stretch at 6 to 98 (VSFAKDFLAG…FAFKDKYKQI (93 aa)) is one Solcar 1 repeat. Ser7 is modified (phosphoserine). The helical transmembrane segment at 8-37 (FAKDFLAGGVAAAISKTAVAPIERVKLLLQ) threads the bilayer. N6-malonyllysine is present on Lys23. Residues 38–74 (VQHASKQITADKQYKGIIDCVVRIPKEQGVLSFWRGN) are Mitochondrial matrix-facing. Lys43 carries the N6-succinyllysine modification. Residue Lys52 is modified to N6,N6,N6-trimethyllysine; alternate. Lys52 is modified (N6,N6-dimethyllysine; alternate). Lys52 is modified (N6-methyllysine; alternate). Residues 75-99 (LANVIRYFPTQALNFAFKDKYKQIF) form a helical membrane-spanning segment. Residues Arg80 and Lys92 each contribute to the ADP site. Residues Lys92 and Lys96 each carry the N6-malonyllysine modification. Residues 100-109 (LGGVDKRTQF) lie on the Mitochondrial intermembrane side of the membrane. Lys105 carries the post-translational modification N6-acetyllysine; alternate. Position 105 is an N6-succinyllysine; alternate (Lys105). A helical transmembrane segment spans residues 110–130 (WRYFAGNLASGGAAGATSLCF). Solcar repeat units lie at residues 111 to 201 (RYFA…AKGM) and 212 to 297 (ISWM…IKKY). The Mitochondrial matrix segment spans residues 131–178 (VYPLDFARTRLAADVGKAGAEREFKGLGDCLVKIYKSDGIKGLYQGFN). Residue Lys147 is modified to N6-methyllysine; alternate. 2 positions are modified to N6-acetyllysine; alternate: Lys147 and Lys155. 2 positions are modified to N6-succinyllysine; alternate: Lys147 and Lys155. The residue at position 147 (Lys147) is an N6-malonyllysine; alternate. Residues Lys163 and Lys166 each carry the N6-acetyllysine modification. Residues 179-199 (VSVQGIIIYRAAYFGIYDTAK) traverse the membrane as a helical segment. Residues 200-210 (GMLPDPKNTHI) are Mitochondrial intermembrane-facing. A helical membrane pass occupies residues 211–231 (FISWMIAQSVTAVAGLTSYPF). Topologically, residues 232–273 (DTVRRRMMMQSGRKGTDIMYTGTLDCWRKIARDEGGKAFFKG) are mitochondrial matrix. An ADP-binding site is contributed by Arg235. Residues 235-240 (RRRMMM) are important for transport activity. The Nucleotide carrier signature motif motif lies at 235–240 (RRRMMM). Position 268 is an N6-acetyllysine; alternate (Lys268). An N6-succinyllysine; alternate modification is found at Lys268. A helical membrane pass occupies residues 274–291 (AWSNVLRGMGGAFVLVLY). Over 292–298 (DEIKKYT) the chain is Mitochondrial intermembrane.

This sequence belongs to the mitochondrial carrier (TC 2.A.29) family. In terms of assembly, monomer. Component of the MMXD complex, which includes CIAO1, ERCC2, CIAO2B, MMS19 and SLC25A5/ANT2. Interacts with AK4. Interacts with TIMM44; leading to inhibit the presequence translocase TIMM23, thereby promoting stabilization of PINK1. In terms of processing, trimethylated by ANTKMT at Lys-52. Present in kidney, brain, heart, liver and skeletal muscle.

It is found in the mitochondrion inner membrane. It localises to the membrane. The catalysed reaction is ADP(in) + ATP(out) = ADP(out) + ATP(in). The enzyme catalyses H(+)(in) = H(+)(out). The matrix-open state (m-state) is inhibited by the membrane-permeable bongkrekic acid (BKA). The cytoplasmic-open state (c-state) is inhibited by the membrane-impermeable toxic inhibitor carboxyatractyloside (CATR). Proton transporter activity is inhibited by ADP:ATP antiporter activity. ADP:ATP antiporter that mediates import of ADP into the mitochondrial matrix for ATP synthesis, and export of ATP out to fuel the cell. Cycles between the cytoplasmic-open state (c-state) and the matrix-open state (m-state): operates by the alternating access mechanism with a single substrate-binding site intermittently exposed to either the cytosolic (c-state) or matrix (m-state) side of the inner mitochondrial membrane. In addition to its ADP:ATP antiporter activity, also involved in mitochondrial uncoupling and mitochondrial permeability transition pore (mPTP) activity. Plays a role in mitochondrial uncoupling by acting as a proton transporter: proton transport uncouples the proton flows via the electron transport chain and ATP synthase to reduce the efficiency of ATP production and cause mitochondrial thermogenesis. Proton transporter activity is inhibited by ADP:ATP antiporter activity, suggesting that SLC25A5/ANT2 acts as a master regulator of mitochondrial energy output by maintaining a delicate balance between ATP production (ADP:ATP antiporter activity) and thermogenesis (proton transporter activity). Proton transporter activity requires free fatty acids as cofactor, but does not transport it. Probably mediates mitochondrial uncoupling in tissues that do not express UCP1. Also plays a key role in mPTP opening, a non-specific pore that enables free passage of the mitochondrial membranes to solutes of up to 1.5 kDa, and which contributes to cell death. It is however unclear if SLC25A5/ANT2 constitutes a pore-forming component of mPTP or regulates it. Acts as a regulator of mitophagy independently of ADP:ATP antiporter activity: promotes mitophagy via interaction with TIMM44, leading to inhibit the presequence translocase TIMM23, thereby promoting stabilization of PINK1. As part of the mitotic spindle-associated MMXD complex it may play a role in chromosome segregation. The chain is ADP/ATP translocase 2 from Rattus norvegicus (Rat).